The sequence spans 329 residues: UDP-3-O-acylglucosamine N-acyltransferase (329 aa).

Histidine 224 functions as the Proton acceptor in the catalytic mechanism.

It belongs to the transferase hexapeptide repeat family. LpxD subfamily. As to quaternary structure, homotrimer.

It catalyses the reaction a UDP-3-O-[(3R)-3-hydroxyacyl]-alpha-D-glucosamine + a (3R)-hydroxyacyl-[ACP] = a UDP-2-N,3-O-bis[(3R)-3-hydroxyacyl]-alpha-D-glucosamine + holo-[ACP] + H(+). It functions in the pathway bacterial outer membrane biogenesis; LPS lipid A biosynthesis. Catalyzes the N-acylation of UDP-3-O-acylglucosamine using 3-hydroxyacyl-ACP as the acyl donor. Is involved in the biosynthesis of lipid A, a phosphorylated glycolipid that anchors the lipopolysaccharide to the outer membrane of the cell. In Albidiferax ferrireducens (strain ATCC BAA-621 / DSM 15236 / T118) (Rhodoferax ferrireducens), this protein is UDP-3-O-acylglucosamine N-acyltransferase.